Reading from the N-terminus, the 81-residue chain is YcgL domain-containing protein Tgr7_3126 (81 aa).

The 81-residue stretch at 1–81 folds into the YcgL domain; it reads MQVYVYKSRR…QMPPQNERPL (81 aa).

In Thioalkalivibrio sulfidiphilus (strain HL-EbGR7), this protein is YcgL domain-containing protein Tgr7_3126.